We begin with the raw amino-acid sequence, 413 residues long: Tyrosine--tRNA ligase (413 aa).

The 'HIGH' region motif lies at 55 to 64 (PTRPDLHLGH). The 'KMSKS' region motif lies at 242-246 (KMSKS). Lys-245 contributes to the ATP binding site. An S4 RNA-binding domain is found at 346–410 (VKLSYILREC…GKKAFRRLVK (65 aa)).

It belongs to the class-I aminoacyl-tRNA synthetase family. TyrS type 2 subfamily. Homodimer.

It localises to the cytoplasm. It carries out the reaction tRNA(Tyr) + L-tyrosine + ATP = L-tyrosyl-tRNA(Tyr) + AMP + diphosphate + H(+). Functionally, catalyzes the attachment of tyrosine to tRNA(Tyr) in a two-step reaction: tyrosine is first activated by ATP to form Tyr-AMP and then transferred to the acceptor end of tRNA(Tyr). The polypeptide is Tyrosine--tRNA ligase (Synechococcus sp. (strain JA-2-3B'a(2-13)) (Cyanobacteria bacterium Yellowstone B-Prime)).